Consider the following 619-residue polypeptide: Dihydroxy-acid dehydratase (619 aa).

Asp81 is a Mg(2+) binding site. Position 122 (Cys122) interacts with [2Fe-2S] cluster. Mg(2+) is bound by residues Asp123 and Lys124. Lys124 carries the post-translational modification N6-carboxylysine. [2Fe-2S] cluster is bound at residue Cys195. Residue Glu494 participates in Mg(2+) binding. Residue Ser520 is the Proton acceptor of the active site.

The protein belongs to the IlvD/Edd family. In terms of assembly, homodimer. [2Fe-2S] cluster is required as a cofactor. Mg(2+) serves as cofactor.

The catalysed reaction is (2R)-2,3-dihydroxy-3-methylbutanoate = 3-methyl-2-oxobutanoate + H2O. It catalyses the reaction (2R,3R)-2,3-dihydroxy-3-methylpentanoate = (S)-3-methyl-2-oxopentanoate + H2O. It functions in the pathway amino-acid biosynthesis; L-isoleucine biosynthesis; L-isoleucine from 2-oxobutanoate: step 3/4. The protein operates within amino-acid biosynthesis; L-valine biosynthesis; L-valine from pyruvate: step 3/4. In terms of biological role, functions in the biosynthesis of branched-chain amino acids. Catalyzes the dehydration of (2R,3R)-2,3-dihydroxy-3-methylpentanoate (2,3-dihydroxy-3-methylvalerate) into 2-oxo-3-methylpentanoate (2-oxo-3-methylvalerate) and of (2R)-2,3-dihydroxy-3-methylbutanoate (2,3-dihydroxyisovalerate) into 2-oxo-3-methylbutanoate (2-oxoisovalerate), the penultimate precursor to L-isoleucine and L-valine, respectively. This chain is Dihydroxy-acid dehydratase, found in Shewanella sp. (strain ANA-3).